A 337-amino-acid polypeptide reads, in one-letter code: MSDAFKPLLSRLADGATLSDDDADAFFSACLRGEPTPAQVGAALTAMRMRGETLGEIAACARAMRRAAIHLEPPFPTIDVCGTGGDGLHTLNISTAVGFVAAGGGLKVAKHGNRAMSSKSGTADVLGELGVNIAAPPEKQLQALDEAGICFLFAPAHHSAMRHVSPIRAELGFRTIFNLLGPLTNPAGAQRQVVGVFAERWVKPLAQALGMLGSEKAWVVHGAGLDELTTTGETSVAEFSDGKVRLFTITPEAVGLRRAALADITGGSPAENAQALRRLLAGETGAYRDIVALNAAAAFLVADKVETLREGVELAGRVLDEGRAQAALERLVEITAP.

Residues Gly82, 85 to 86, Thr90, 92 to 95, 110 to 118, and Thr122 each bind 5-phospho-alpha-D-ribose 1-diphosphate; these read GD, NIST, and KHGNRAMSS. Anthranilate is bound at residue Gly82. Residue Ser94 coordinates Mg(2+). Position 113 (Asn113) interacts with anthranilate. Arg168 is a binding site for anthranilate. Mg(2+)-binding residues include Asp226 and Glu227.

The protein belongs to the anthranilate phosphoribosyltransferase family. As to quaternary structure, homodimer. Requires Mg(2+) as cofactor.

The enzyme catalyses N-(5-phospho-beta-D-ribosyl)anthranilate + diphosphate = 5-phospho-alpha-D-ribose 1-diphosphate + anthranilate. It functions in the pathway amino-acid biosynthesis; L-tryptophan biosynthesis; L-tryptophan from chorismate: step 2/5. Its function is as follows. Catalyzes the transfer of the phosphoribosyl group of 5-phosphorylribose-1-pyrophosphate (PRPP) to anthranilate to yield N-(5'-phosphoribosyl)-anthranilate (PRA). The protein is Anthranilate phosphoribosyltransferase of Phenylobacterium zucineum (strain HLK1).